Consider the following 349-residue polypeptide: Inositol 2-dehydrogenase (349 aa).

It belongs to the Gfo/Idh/MocA family. As to quaternary structure, homotetramer.

The catalysed reaction is myo-inositol + NAD(+) = scyllo-inosose + NADH + H(+). Involved in the oxidation of myo-inositol (MI) to 2-keto-myo-inositol (2KMI or 2-inosose). The sequence is that of Inositol 2-dehydrogenase from Mycolicibacterium gilvum (strain PYR-GCK) (Mycobacterium gilvum (strain PYR-GCK)).